The sequence spans 419 residues: Serine/threonine-protein kinase Kist (419 aa).

Positions 23–304 constitute a Protein kinase domain; that stretch reads WQVQSRLGSG…AEMALCSPFF (282 aa). ATP-binding positions include 29–37 and lysine 54; that span reads LGSGSSASV. Active-site proton acceptor residues include aspartate 141 and aspartate 158. Positions 324–406 constitute an RRM domain; it reads RLLNVLDDDY…KFVVATFYPL (83 aa).

It belongs to the protein kinase superfamily. Ser/Thr protein kinase family. In terms of assembly, interacts with stathmin, PAM and CDKN1B/p27Kip1.

Its subcellular location is the nucleus. The catalysed reaction is L-seryl-[protein] + ATP = O-phospho-L-seryl-[protein] + ADP + H(+). It catalyses the reaction L-threonyl-[protein] + ATP = O-phospho-L-threonyl-[protein] + ADP + H(+). In terms of biological role, upon serum stimulation, phosphorylates CDKN1B/p27Kip1, thus controlling CDKN1B subcellular location and cell cycle progression in G1 phase. May be involved in trafficking and/or processing of RNA. The polypeptide is Serine/threonine-protein kinase Kist (UHMK1) (Pongo abelii (Sumatran orangutan)).